Here is a 187-residue protein sequence, read N- to C-terminus: Epididymal-specific lipocalin-10 (187 aa).

The signal sequence occupies residues methionine 1–alanine 19. Cysteine 90 and cysteine 163 are oxidised to a cystine. An N-linked (GlcNAc...) asparagine glycan is attached at asparagine 149. At lysine 170 the chain carries N6-acetyllysine.

This sequence belongs to the calycin superfamily. Lipocalin family.

It localises to the secreted. May play a role in male fertility. May act as a retinoid carrier protein within the epididymis. The sequence is that of Epididymal-specific lipocalin-10 (LCN10) from Homo sapiens (Human).